Consider the following 357-residue polypeptide: Thiamine thiazole synthase, chloroplastic (357 aa).

Substrate is bound by residues A102, 123–124, G131, and V196; that span reads EQ. C233 is modified (2,3-didehydroalanine (Cys)). Residues D235, H250, M304, and 314–316 each bind substrate; that span reads RMG.

Belongs to the THI4 family. As to quaternary structure, homooctamer. The cofactor is Fe cation. During the catalytic reaction, a sulfide is transferred from Cys-233 to a reaction intermediate, generating a dehydroalanine residue.

It localises to the plastid. Its subcellular location is the chloroplast. It catalyses the reaction [ADP-thiazole synthase]-L-cysteine + glycine + NAD(+) = [ADP-thiazole synthase]-dehydroalanine + ADP-5-ethyl-4-methylthiazole-2-carboxylate + nicotinamide + 3 H2O + 2 H(+). Its function is as follows. Involved in biosynthesis of the thiamine precursor thiazole. Catalyzes the conversion of NAD and glycine to adenosine diphosphate 5-(2-hydroxyethyl)-4-methylthiazole-2-carboxylic acid (ADT), an adenylated thiazole intermediate. The reaction includes an iron-dependent sulfide transfer from a conserved cysteine residue of the protein to a thiazole intermediate. The enzyme can only undergo a single turnover, which suggests it is a suicide enzyme. May have additional roles in adaptation to various stress conditions and in DNA damage tolerance. In Chlamydomonas reinhardtii (Chlamydomonas smithii), this protein is Thiamine thiazole synthase, chloroplastic.